The primary structure comprises 335 residues: Glyceraldehyde-3-phosphate dehydrogenase (335 aa).

NAD(+) is bound by residues 11–12 (RI), Asp-33, and Lys-78. D-glyceraldehyde 3-phosphate-binding positions include 148–150 (SST), Thr-179, 208–209 (TG), and Arg-231. Position 313 (Asn-313) interacts with NAD(+).

The protein belongs to the glyceraldehyde-3-phosphate dehydrogenase family. In terms of assembly, homotetramer.

It localises to the cytoplasm. It catalyses the reaction D-glyceraldehyde 3-phosphate + phosphate + NAD(+) = (2R)-3-phospho-glyceroyl phosphate + NADH + H(+). Its pathway is carbohydrate degradation; glycolysis; pyruvate from D-glyceraldehyde 3-phosphate: step 1/5. This is Glyceraldehyde-3-phosphate dehydrogenase (GPD) from Pleurotus sajor-caju (Oyster mushroom).